A 113-amino-acid polypeptide reads, in one-letter code: MNTVRGTFLLVFGLAASLGQADKNENRREMQKKTEQGKSYLNFAENLLLQKLEELEAKLLEKHSKKSKNSRQKRCIGKDVPCDENDPRCCSGLICLTPTLHGIWYKSYYCYKK.

The N-terminal stretch at 1–21 (MNTVRGTFLLVFGLAASLGQA) is a signal peptide. The propeptide occupies 22–74 (DKNENRREMQKKTEQGKSYLNFAENLLLQKLEELEAKLLEKHSKKSKNSRQKR). 3 disulfides stabilise this stretch: C75–C90, C82–C95, and C89–C110.

Belongs to the neurotoxin 14 (magi-1) family. 01 (HNTX-16) subfamily. In terms of tissue distribution, expressed by the venom gland.

The protein resides in the secreted. Probable ion channel inhibitor. This chain is U11-theraphotoxin-Hhn1m, found in Cyriopagopus hainanus (Chinese bird spider).